Reading from the N-terminus, the 226-residue chain is Leucyl/phenylalanyl-tRNA--protein transferase (226 aa).

Belongs to the L/F-transferase family.

The protein localises to the cytoplasm. It catalyses the reaction N-terminal L-lysyl-[protein] + L-leucyl-tRNA(Leu) = N-terminal L-leucyl-L-lysyl-[protein] + tRNA(Leu) + H(+). The catalysed reaction is N-terminal L-arginyl-[protein] + L-leucyl-tRNA(Leu) = N-terminal L-leucyl-L-arginyl-[protein] + tRNA(Leu) + H(+). The enzyme catalyses L-phenylalanyl-tRNA(Phe) + an N-terminal L-alpha-aminoacyl-[protein] = an N-terminal L-phenylalanyl-L-alpha-aminoacyl-[protein] + tRNA(Phe). Functions in the N-end rule pathway of protein degradation where it conjugates Leu, Phe and, less efficiently, Met from aminoacyl-tRNAs to the N-termini of proteins containing an N-terminal arginine or lysine. This is Leucyl/phenylalanyl-tRNA--protein transferase from Azotobacter vinelandii (strain DJ / ATCC BAA-1303).